The following is a 608-amino-acid chain: Glutamine--fructose-6-phosphate aminotransferase [isomerizing] (608 aa).

Residue C2 is the Nucleophile; for GATase activity of the active site. The 216-residue stretch at 2–217 folds into the Glutamine amidotransferase type-2 domain; that stretch reads CGIVGILGRE…DGDWVVLTRN (216 aa). 2 consecutive SIS domains span residues 284–423 and 456–598; these read LPFD…ARGE and LARE…VDQP. The active-site For Fru-6P isomerization activity is the K603.

Homodimer.

It localises to the cytoplasm. The enzyme catalyses D-fructose 6-phosphate + L-glutamine = D-glucosamine 6-phosphate + L-glutamate. Catalyzes the first step in hexosamine metabolism, converting fructose-6P into glucosamine-6P using glutamine as a nitrogen source. This chain is Glutamine--fructose-6-phosphate aminotransferase [isomerizing] (glmS), found in Bradyrhizobium diazoefficiens (strain JCM 10833 / BCRC 13528 / IAM 13628 / NBRC 14792 / USDA 110).